Consider the following 486-residue polypeptide: Photosystem II CP43 reaction center protein (486 aa).

The propeptide occupies 1–28; it reads MKVFVHGWQHKISHTRILYSLRRFYHVE. The next 5 helical transmembrane spans lie at 82 to 106, 147 to 168, 191 to 213, 268 to 288, and 304 to 325; these read LFEV…PHLA, LIGP…RDKN, KALF…RLIN, KPFA…LSYS, and WYNN…ASQA. Residue glutamate 380 participates in [CaMn4O5] cluster binding. The helical transmembrane segment at 460 to 484 threads the bilayer; the sequence is RARAAAAGFEKGINRENEAVLSMRP.

This sequence belongs to the PsbB/PsbC family. PsbC subfamily. PSII is composed of 1 copy each of membrane proteins PsbA, PsbB, PsbC, PsbD, PsbE, PsbF, PsbH, PsbI, PsbJ, PsbK, PsbL, PsbM, PsbT, PsbX, PsbY, PsbZ, Psb30/Ycf12, at least 3 peripheral proteins of the oxygen-evolving complex and a large number of cofactors. It forms dimeric complexes. Requires Binds multiple chlorophylls and provides some of the ligands for the Ca-4Mn-5O cluster of the oxygen-evolving complex. It may also provide a ligand for a Cl- that is required for oxygen evolution. PSII binds additional chlorophylls, carotenoids and specific lipids. as cofactor.

It is found in the plastid. It localises to the chloroplast thylakoid membrane. Its function is as follows. One of the components of the core complex of photosystem II (PSII). It binds chlorophyll and helps catalyze the primary light-induced photochemical processes of PSII. PSII is a light-driven water:plastoquinone oxidoreductase, using light energy to abstract electrons from H(2)O, generating O(2) and a proton gradient subsequently used for ATP formation. The protein is Photosystem II CP43 reaction center protein of Gracilaria tenuistipitata var. liui (Red alga).